A 160-amino-acid chain; its full sequence is UPF0262 protein ELI_10965 (160 aa).

Belongs to the UPF0262 family.

This Erythrobacter litoralis (strain HTCC2594) protein is UPF0262 protein ELI_10965.